A 48-amino-acid polypeptide reads, in one-letter code: Large ribosomal subunit protein uL14 (48 aa).

Belongs to the universal ribosomal protein uL14 family.

The protein is Large ribosomal subunit protein uL14 (RPL23) of Onchocerca volvulus.